Here is a 552-residue protein sequence, read N- to C-terminus: Chaperonin GroEL (552 aa).

ATP contacts are provided by residues 30-33 (TLGP), lysine 51, 87-91 (DGTTT), glycine 415, 480-482 (NAA), and aspartate 496.

It belongs to the chaperonin (HSP60) family. As to quaternary structure, forms a cylinder of 14 subunits composed of two heptameric rings stacked back-to-back. Interacts with the co-chaperonin GroES.

The protein localises to the cytoplasm. The enzyme catalyses ATP + H2O + a folded polypeptide = ADP + phosphate + an unfolded polypeptide.. Together with its co-chaperonin GroES, plays an essential role in assisting protein folding. The GroEL-GroES system forms a nano-cage that allows encapsulation of the non-native substrate proteins and provides a physical environment optimized to promote and accelerate protein folding. The protein is Chaperonin GroEL of Coxiella burnetii (strain RSA 493 / Nine Mile phase I).